Here is a 1047-residue protein sequence, read N- to C-terminus: Ras GTPase-activating protein 1 (1047 aa).

M1 carries the N-acetylmethionine modification. The SH2 1 domain maps to W181 to V272. In terms of domain architecture, SH3 spans E279–R341. The 91-residue stretch at W351–V441 folds into the SH2 2 domain. The 104-residue stretch at N474 to N577 folds into the PH domain. One can recognise a C2 domain in the interval N577–F690. Position 615 is a phosphotyrosine (Y615). Positions K764–L974 constitute a Ras-GAP domain. S831 bears the Phosphoserine mark.

In terms of assembly, interacts with SQSTM1. Interacts with SPSB1; the interaction does not promote degradation. Interacts with CAV2 (tyrosine phosphorylated form). Directly interacts with NCK1. Interacts with PDGFRB (tyrosine phosphorylated). Interacts (via SH2 domain) with the 'Tyr-9' phosphorylated form of PDPK1. Interacts with tyrosine-phosphorylated EPHB4. In terms of processing, the N-terminus is blocked. Post-translationally, phosphorylated by SRC and LCK. The phosphorylation SRC inhibits its ability to stimulate the Ras-GTPase activity, whereas phosphorylation by LCK does not display any effect on stimulation activity. In placental villi, detected only in the trophoblast layer (cytotrophoblast and syncytiotrophoblast). Not detected in stromal, endothelial or Hofbauer cells (at protein level).

It localises to the cytoplasm. In terms of biological role, inhibitory regulator of the Ras-cyclic AMP pathway. Stimulates the GTPase of normal but not oncogenic Ras p21; this stimulation may be further increased in the presence of NCK1. The protein is Ras GTPase-activating protein 1 (RASA1) of Homo sapiens (Human).